The following is a 459-amino-acid chain: Cysteine--tRNA ligase (459 aa).

Zn(2+) is bound at residue C28. The 'HIGH' region motif lies at 30–40; that stretch reads VTIYDLCHIGH. Zn(2+)-binding residues include C209, H234, and E238. Positions 266-270 match the 'KMSKS' region motif; the sequence is KMSKS. K269 is an ATP binding site.

The protein belongs to the class-I aminoacyl-tRNA synthetase family. As to quaternary structure, monomer. Zn(2+) serves as cofactor.

Its subcellular location is the cytoplasm. The catalysed reaction is tRNA(Cys) + L-cysteine + ATP = L-cysteinyl-tRNA(Cys) + AMP + diphosphate. The chain is Cysteine--tRNA ligase from Shewanella pealeana (strain ATCC 700345 / ANG-SQ1).